Reading from the N-terminus, the 214-residue chain is rRNA methyltransferase 2, mitochondrial (214 aa).

Residues 1–18 (MFSTKKSQGNLHKYIQRQ) constitute a mitochondrion transit peptide. S-adenosyl-L-methionine contacts are provided by residues 63-66 (PGSW), aspartate 83, 100-101 (DI), and aspartate 125. The Proton acceptor role is filled by lysine 169.

This sequence belongs to the class I-like SAM-binding methyltransferase superfamily. RNA methyltransferase RlmE family.

The protein localises to the mitochondrion. The enzyme catalyses a uridine in rRNA + S-adenosyl-L-methionine = a 2'-O-methyluridine in rRNA + S-adenosyl-L-homocysteine + H(+). S-adenosyl-L-methionine-dependent 2'-O-ribose methyltransferase that catalyzes the formation of 2'-O-methyluridine at position 808 (Um808) in the mitochondrial large subunit ribosomal RNA (mtLSU rRNA), a universally conserved modification in the peptidyl transferase domain of the mtLSU rRNA. This activity may require prior 2'-O-methylguanosine modification at position 809 (Gm809) by MRM3. Essential for late-stage assembly of mtLSU required for efficient translation of mitochondrial DNA encoded proteins; methyltransferase activity is not required for this function. Essential for mitochondrial respiratory function. The polypeptide is rRNA methyltransferase 2, mitochondrial (Caenorhabditis elegans).